The sequence spans 188 residues: Large ribosomal subunit protein eL18B (188 aa).

The interval 153–188 is disordered; sequence GKAPGTPHSRTKPYVLSKGRKFERARGRRASRGYKN. Residues 178–188 show a composition bias toward basic residues; it reads RGRRASRGYKN.

The protein belongs to the eukaryotic ribosomal protein eL18 family. As to quaternary structure, component of the large ribosomal subunit.

Its subcellular location is the cytoplasm. The protein resides in the cytosol. It localises to the rough endoplasmic reticulum. Functionally, component of the large ribosomal subunit. The ribosome is a large ribonucleoprotein complex responsible for the synthesis of proteins in the cell. This chain is Large ribosomal subunit protein eL18B (rpl18-b), found in Xenopus laevis (African clawed frog).